The following is a 207-amino-acid chain: Ribosomal RNA small subunit methyltransferase G (207 aa).

S-adenosyl-L-methionine is bound by residues Gly-74, Leu-79, 125-126 (VE), and Arg-140.

Belongs to the methyltransferase superfamily. RNA methyltransferase RsmG family.

The protein localises to the cytoplasm. The catalysed reaction is guanosine(527) in 16S rRNA + S-adenosyl-L-methionine = N(7)-methylguanosine(527) in 16S rRNA + S-adenosyl-L-homocysteine. Its function is as follows. Specifically methylates the N7 position of guanine in position 527 of 16S rRNA. The protein is Ribosomal RNA small subunit methyltransferase G of Shewanella piezotolerans (strain WP3 / JCM 13877).